The chain runs to 312 residues: MIRHFLADDDLTPSEQAAVLDEAARLKKDRYAARPLTGPRSVAVVFEKPSTRTRVSFEVAITELGGQPVVLDAVGSQLGRGEPIEDTARVLSRYVAAIVLRTFGHDRITTLARYATVPVVNALSDAYHPCQALADLLTIRERKGGLDGVRLAYVGDGNNVACSLLVAGAMAGLHVTVASPAGYQPPPAVVARAAEIGEQTGGRVEVVDDPRTAARNADVLYTDVWTSMGQEEETAARRRAFAGFTVDDDLLALAADDAIVLHCLPAHRGEEITASVLEGPQSAIFDQAENRLHTAKALLSFLLDAAGGRGIP.

Carbamoyl phosphate is bound by residues 50-53 (STRT), Gln-77, Arg-101, and 128-131 (HPCQ). L-ornithine contacts are provided by residues Asn-159, Asp-223, and 227–228 (SM). Carbamoyl phosphate-binding positions include 263–264 (CL) and Arg-291.

The protein belongs to the aspartate/ornithine carbamoyltransferase superfamily. OTCase family.

The protein localises to the cytoplasm. The enzyme catalyses carbamoyl phosphate + L-ornithine = L-citrulline + phosphate + H(+). The protein operates within amino-acid biosynthesis; L-arginine biosynthesis; L-arginine from L-ornithine and carbamoyl phosphate: step 1/3. Its function is as follows. Reversibly catalyzes the transfer of the carbamoyl group from carbamoyl phosphate (CP) to the N(epsilon) atom of ornithine (ORN) to produce L-citrulline. The polypeptide is Ornithine carbamoyltransferase (Acidothermus cellulolyticus (strain ATCC 43068 / DSM 8971 / 11B)).